The chain runs to 152 residues: 3-dehydroquinate dehydratase (152 aa).

Tyr26 functions as the Proton acceptor in the catalytic mechanism. Residues Asn77, His83, and Asp90 each contribute to the substrate site. The active-site Proton donor is His103. Residues Leu104 to Ser105 and Arg114 each bind substrate.

This sequence belongs to the type-II 3-dehydroquinase family. As to quaternary structure, homododecamer.

The enzyme catalyses 3-dehydroquinate = 3-dehydroshikimate + H2O. The protein operates within metabolic intermediate biosynthesis; chorismate biosynthesis; chorismate from D-erythrose 4-phosphate and phosphoenolpyruvate: step 3/7. Its function is as follows. Catalyzes a trans-dehydration via an enolate intermediate. The chain is 3-dehydroquinate dehydratase from Tolumonas auensis (strain DSM 9187 / NBRC 110442 / TA 4).